The chain runs to 143 residues: High mobility group protein B (143 aa).

Residues M1–Q22 form a disordered region. The segment at residues P18–K86 is a DNA-binding region (HMG box). A70 carries the post-translational modification Blocked amino end (Ala). Composition is skewed to basic and acidic residues over residues A100–K120 and A131–K143. A disordered region spans residues A100–K143.

It is found in the nucleus. Its subcellular location is the chromosome. The sequence is that of High mobility group protein B from Tetrahymena thermophila.